Here is a 113-residue protein sequence, read N- to C-terminus: Putative membrane protein insertion efficiency factor (113 aa).

This sequence belongs to the UPF0161 family.

Its subcellular location is the cell inner membrane. Could be involved in insertion of integral membrane proteins into the membrane. In Campylobacter jejuni subsp. jejuni serotype O:23/36 (strain 81-176), this protein is Putative membrane protein insertion efficiency factor.